The chain runs to 665 residues: Lamin-A (665 aa).

Met-1 is subject to N-acetylmethionine. A head region spans residues 1–29; it reads METPGQKRATRSTHTPLSPTRITRLQEKE. Position 18 is a phosphoserine (Ser-18). An IF rod domain is found at 27–383; it reads EKEDLQGLND…KLLEGEEERL (357 aa). The segment at 30 to 66 is coil 1A; it reads DLQGLNDRLAVYIDKVRSLELENARLRLRITESEDVI. Positions 67-76 are linker 1; sequence SREVTGIKSA. The interval 77–214 is coil 1B; sequence YETELADARK…SIYNEEMRET (138 aa). Residues 215–238 form a linker 2 region; it reads KRRHETRLVEVDNGRQREFESKLA. A coil 2 region spans residues 239 to 383; that stretch reads DALHELRAQH…KLLEGEEERL (145 aa). Disordered regions lie at residues 381-441, 550-581, and 602-641; these read ERLR…SVEE, DDED…GEYN, and ASQG…LGES. The segment at 384–664 is tail; sequence RLSPSPNTQK…AQVAPQNCSI (281 aa). The residue at position 388 (Ser-388) is a Phosphoserine. The segment covering 399–411 has biased composition (low complexity); that stretch reads IASHSGAHISSSA. The short motif at 413 to 418 is the Nuclear localization signal element; the sequence is KRRRLE. An LTD domain is found at 425–542; sequence SSFTQHARTT…EEVAMRKLVR (118 aa). Residues 427-436 show a composition bias toward polar residues; the sequence is FTQHARTTGK. Positions 605 to 630 are enriched in low complexity; sequence GSGLVTGSSGSSSSSVTLTRTYRSTG. Residue Cys-662 is modified to Cysteine methyl ester. Cys-662 carries S-farnesyl cysteine lipidation. Residues 663-665 constitute a propeptide, removed in mature form; the sequence is SIM.

The protein belongs to the intermediate filament family. Homodimer. Lamin dimers then assemble into dimeric head-to-tail polymers. Ultimately, two head-to-tail polymers assemble laterally into a protofilament with a uniformly shaped rod of 3.5 nm in diameter. In terms of processing, phosphorylation plays a key role in lamin organization, subcellular localization and nuclear envelope disintegration. Phosphorylation by CDK1 at Ser-18 at the onset of mitosis drives lamin disassembly and nuclear envelope breakdown.

Its subcellular location is the nucleus lamina. It is found in the nucleus envelope. It localises to the nucleus. The protein resides in the nucleoplasm. The protein localises to the nucleus matrix. Functionally, lamins are intermediate filament proteins that assemble into a filamentous meshwork, and which constitute the major components of the nuclear lamina, a fibrous layer on the nucleoplasmic side of the inner nuclear membrane. Lamins provide a framework for the nuclear envelope, bridging the nuclear envelope and chromatin, thereby playing an important role in nuclear assembly, chromatin organization, nuclear membrane and telomere dynamics. The structural integrity of the lamina is strictly controlled by the cell cycle, as seen by the disintegration and formation of the nuclear envelope in prophase and telophase, respectively. This Xenopus laevis (African clawed frog) protein is Lamin-A (lmna).